Consider the following 260-residue polypeptide: ATP-dependent zinc metalloprotease FTSH, chloroplastic (260 aa).

Zn(2+) is bound at residue His-219. Glu-220 is an active-site residue. Position 223 (His-223) interacts with Zn(2+).

The protein in the N-terminal section; belongs to the AAA ATPase family. It in the C-terminal section; belongs to the peptidase M41 family. The cofactor is Zn(2+).

The protein resides in the plastid. It is found in the chloroplast thylakoid membrane. Probable ATP-dependent zinc metallopeptidase. The polypeptide is ATP-dependent zinc metalloprotease FTSH, chloroplastic (Helianthus annuus (Common sunflower)).